Reading from the N-terminus, the 485-residue chain is Serine/threonine-protein kinase 4 (485 aa).

The 252-residue stretch at 30-281 (FDVLEKLGEG…ATELLQHPFI (252 aa)) folds into the Protein kinase domain. ATP-binding positions include 36-44 (LGEGSYGSV) and Lys59. The Proton acceptor role is filled by Asp149. Position 183 is a phosphothreonine; by autocatalysis (Thr183). One can recognise an SARAH domain in the interval 431-478 (YSFLKDWSVAEVQLKLNSLDPMMEREIEEIHHKYQAKRQPILEAIESK).

The protein belongs to the protein kinase superfamily. STE Ser/Thr protein kinase family. STE20 subfamily. Homodimer; mediated via the coiled-coil region. The cofactor is Mg(2+). Post-translationally, autophosphorylated on Thr-183. Proteolytically cleaved by caspase-3 during apoptosis at Asp-326 resulting in a 37 kDa form. Proteolytic cleavage results in kinase activation and nuclear translocation of the truncated form (MST1/N).

It is found in the cytoplasm. It localises to the nucleus. The enzyme catalyses L-seryl-[protein] + ATP = O-phospho-L-seryl-[protein] + ADP + H(+). The catalysed reaction is L-threonyl-[protein] + ATP = O-phospho-L-threonyl-[protein] + ADP + H(+). With respect to regulation, the C-terminal non-catalytic region inhibits the kinase activity, the enzyme is activated by caspase-cleavage. Homodimerization and autophosphorylation of Thr-183 is also required for full activation. Stress-activated, pro-apoptotic kinase which, following caspase-cleavage, enters the nucleus and induces chromatin condensation followed by internucleosomal DNA fragmentation. Key component of the Hippo signaling pathway which plays a pivotal role in organ size control and tumor suppression by restricting proliferation and promoting apoptosis. The core of this pathway is composed of a kinase cascade wherein stk3/mst2 and stk4/mst1, in complex with its regulatory protein sav1, phosphorylates and activates lats1/2 in complex with its regulatory protein mob1, which in turn phosphorylates and inactivates yap1 oncoprotein and wwtr1/taz. Phosphorylation of yap1 by lats2 inhibits its translocation into the nucleus to regulate cellular genes important for cell proliferation, cell death, and cell migration. Phosphorylates 'Ser-14' of histone H2B (H2BS14ph) during apoptosis. The protein is Serine/threonine-protein kinase 4 (stk4) of Xenopus laevis (African clawed frog).